The chain runs to 239 residues: Probable inner membrane transporter protein TsaS (239 aa).

The next 4 membrane-spanning stretches (helical) occupy residues 65 to 85, 128 to 148, 160 to 180, and 186 to 206; these read AIGAILPGMAVGALIGLWLMG, GLVGVLEVMFATAGPMVIALL, ATVPVVMVVAASIAIAVLFGA, and AHTFERWLVALPIAFMGVVLG.

Belongs to the 4-toluene sulfonate uptake permease (TSUP) (TC 2.A.102) family. Part of a two-component transport system composed of TsaT and TsaS.

It is found in the cell inner membrane. Functionally, involved in the uptake of p-toluenesulphonate (TSA). The protein is Probable inner membrane transporter protein TsaS (tsaS) of Comamonas testosteroni (Pseudomonas testosteroni).